Consider the following 546-residue polypeptide: Interleukin-20 receptor subunit alpha (546 aa).

Positions 1-32 are cleaved as a signal peptide; the sequence is MHTPGTPAPGHPDPPPLLLLTLLLLLAASGRA. The Extracellular portion of the chain corresponds to 33-253; that stretch reads VPCVFCGLPK…EVQTSAWKAK (221 aa). Fibronectin type-III domains lie at 42–138 and 139–245; these read KPTN…FLET and QVSP…TLEV. N-linked (GlcNAc...) asparagine glycosylation is found at Asn-45, Asn-86, Asn-94, Asn-185, and Asn-203. A disulfide bond links Cys-90 and Cys-98. A disulfide bond links Cys-218 and Cys-239. A helical membrane pass occupies residues 254–274; sequence VIFWYVFLTSVIVFLFSAIGY. Topologically, residues 275–546 are cytoplasmic; the sequence is LVYRYIHVGK…EWGLHVQMES (272 aa).

This sequence belongs to the type II cytokine receptor family. Heterodimer with IL20RB and heterodimer with IL10RB.

Its subcellular location is the membrane. Its function is as follows. The IL20RA/IL20RB dimer is a receptor for IL19, IL20 and IL24. The IL20RA/IL10RB dimer is a receptor for IL26. The sequence is that of Interleukin-20 receptor subunit alpha (Il20ra) from Mus musculus (Mouse).